A 148-amino-acid chain; its full sequence is Large ribosomal subunit protein bL9 (148 aa).

This sequence belongs to the bacterial ribosomal protein bL9 family.

Binds to the 23S rRNA. The protein is Large ribosomal subunit protein bL9 of Azotobacter vinelandii (strain DJ / ATCC BAA-1303).